The sequence spans 408 residues: Acetate kinase (408 aa).

A Mg(2+)-binding site is contributed by asparagine 7. Lysine 14 contributes to the ATP binding site. Residue arginine 91 participates in substrate binding. Catalysis depends on aspartate 148, which acts as the Proton donor/acceptor. Residues 208-212, 283-285, and 331-335 contribute to the ATP site; these read HLGNG, DFR, and GIGEN. Glutamate 384 contributes to the Mg(2+) binding site.

This sequence belongs to the acetokinase family. In terms of assembly, homodimer. The cofactor is Mg(2+). It depends on Mn(2+) as a cofactor.

It localises to the cytoplasm. The enzyme catalyses acetate + ATP = acetyl phosphate + ADP. It functions in the pathway metabolic intermediate biosynthesis; acetyl-CoA biosynthesis; acetyl-CoA from acetate: step 1/2. Its activity is regulated as follows. Inhibited by diethylpyrocarbonate, hydroxylamine and phenylglyoxal. Functionally, catalyzes the formation of acetyl phosphate from acetate and ATP. Can also catalyze the reverse reaction. Can also phosphorylate propionate, but has very low activity toward butyrate. The protein is Acetate kinase of Methanosarcina thermophila.